A 917-amino-acid polypeptide reads, in one-letter code: Catenin alpha (917 aa).

Phosphothreonine occurs at positions 643 and 645. Phosphoserine occurs at positions 659 and 662. A compositionally biased stretch (basic and acidic residues) spans 878 to 890 (PLVRPEKPEEVRA). Residues 878–905 (PLVRPEKPEEVRAKVRKGSQKKVQNPIH) form a disordered region.

The protein belongs to the vinculin/alpha-catenin family. In terms of assembly, interacts with arm/armadillo protein. In terms of processing, rapidly phosphorylated by CK2 and more slowly by CK1.

It localises to the cytoplasm. The protein resides in the cytoskeleton. Its subcellular location is the cell junction. The protein localises to the adherens junction. It is found in the cell membrane. Functionally, associates with the cytoplasmic domain of a variety of cadherins. The association of catenins to cadherins produces a complex which is linked to the actin filament network, and which seems to be of primary importance for cadherins cell-adhesion properties. The polypeptide is Catenin alpha (Drosophila melanogaster (Fruit fly)).